We begin with the raw amino-acid sequence, 102 residues long: UPF0147 protein MTH_1407 (102 aa).

It belongs to the UPF0147 family.

This chain is UPF0147 protein MTH_1407, found in Methanothermobacter thermautotrophicus (strain ATCC 29096 / DSM 1053 / JCM 10044 / NBRC 100330 / Delta H) (Methanobacterium thermoautotrophicum).